The following is a 616-amino-acid chain: MSPNDAFISAPAKIETPVGPRNEGQPAWNKQRGSSMPVNRYMPFEVEVEDISLPDRTWPDKKITVAPQWCAVDLRDGNQALIDPMSPERKRRMFELLVQMGFKEIEVGFPSASQTDFDFVREIIEKGMIPDDVTIQVLVQAREHLIRRTFEACEGAKNVIVHFYNSTSILQRNVVFRMDKVQVKKLATDAAELIKTIAQDYPDTNWRWQYSPESFTGTEVEYAKEVVDAVVEVMDPTPENPMIINLPSTVEMITPNVYADSIEWMHRNLNRRDSIILSLHPHNDRGTGVGAAELGYMAGADRIEGCLFGNGERTGNVCLVTLALNMLTQGVDPQLDFTDIRQIRSTVEYCNQLRVPERHPYGGDLVFTAFSGSHQDAVNKGLDAMAAKVQPGASSTEVSWEQLRDTEWEVPYLPIDPKDVGRDYEAVIRVNSQSGKGGVAYIMKTDHGLQIPRSMQVEFSTVVQNVTDAEGGEVNSKAMWDIFATEYLERTAPVEQIALRVENAQTENEDASITAELIHNGKDVTVDGRGNGPLAAYANALEKLGIDVEIQEYNQHARTSGDDAEAAAYVLAEVNGRKVWGVGIAGSITYASLKAVTSAVNRALDVNHEAVLAGGV.

Positions 1 to 34 (MSPNDAFISAPAKIETPVGPRNEGQPAWNKQRGS) are disordered. The 275-residue stretch at 67–341 (PQWCAVDLRD…DPQLDFTDIR (275 aa)) folds into the Pyruvate carboxyltransferase domain. 4 residues coordinate Mg(2+): Asp76, His280, His282, and Asn316. The regulatory domain stretch occupies residues 490 to 616 (RTAPVEQIAL…NHEAVLAGGV (127 aa)).

It belongs to the alpha-IPM synthase/homocitrate synthase family. LeuA type 2 subfamily. In terms of assembly, homodimer. It depends on Mg(2+) as a cofactor.

It is found in the cytoplasm. The catalysed reaction is 3-methyl-2-oxobutanoate + acetyl-CoA + H2O = (2S)-2-isopropylmalate + CoA + H(+). It participates in amino-acid biosynthesis; L-leucine biosynthesis; L-leucine from 3-methyl-2-oxobutanoate: step 1/4. Its activity is regulated as follows. Inhibited by L-leucine, the pathway end product. In terms of biological role, catalyzes the condensation of the acetyl group of acetyl-CoA with 3-methyl-2-oxobutanoate (2-ketoisovalerate) to form 3-carboxy-3-hydroxy-4-methylpentanoate (2-isopropylmalate). Complements an E.coli leuA deletion. The chain is 2-isopropylmalate synthase from Corynebacterium glutamicum (strain ATCC 13032 / DSM 20300 / JCM 1318 / BCRC 11384 / CCUG 27702 / LMG 3730 / NBRC 12168 / NCIMB 10025 / NRRL B-2784 / 534).